The primary structure comprises 575 residues: Malto-oligosyltrehalose trehalohydrolase (575 aa).

A substrate-binding site is contributed by 248-253 (RLDAVH). D250 serves as the catalytic Nucleophile. E287 functions as the Proton donor in the catalytic mechanism. Substrate is bound by residues 312 to 316 (DDVHH) and 381 to 386 (HDQVGN).

Belongs to the glycosyl hydrolase 13 family.

It localises to the cytoplasm. The enzyme catalyses hydrolysis of (1-&gt;4)-alpha-D-glucosidic linkage in 4-alpha-D-[(1-&gt;4)-alpha-D-glucanosyl]n trehalose to yield trehalose and (1-&gt;4)-alpha-D-glucan.. It participates in glycan biosynthesis; trehalose biosynthesis. This Arthrobacter ramosus protein is Malto-oligosyltrehalose trehalohydrolase (treZ).